The chain runs to 300 residues: NAD kinase (300 aa).

The active-site Proton acceptor is Asp-75. NAD(+) contacts are provided by residues 75-76 (DG), 149-150 (ND), Arg-177, Asp-179, 190-195 (TAYALS), Ala-214, and Gln-248.

The protein belongs to the NAD kinase family. Requires a divalent metal cation as cofactor.

The protein localises to the cytoplasm. It catalyses the reaction NAD(+) + ATP = ADP + NADP(+) + H(+). Its function is as follows. Involved in the regulation of the intracellular balance of NAD and NADP, and is a key enzyme in the biosynthesis of NADP. Catalyzes specifically the phosphorylation on 2'-hydroxyl of the adenosine moiety of NAD to yield NADP. The protein is NAD kinase of Burkholderia ambifaria (strain MC40-6).